Reading from the N-terminus, the 138-residue chain is Ribosome-binding factor A (138 aa).

It belongs to the RbfA family. As to quaternary structure, monomer. Binds 30S ribosomal subunits, but not 50S ribosomal subunits or 70S ribosomes.

The protein resides in the cytoplasm. One of several proteins that assist in the late maturation steps of the functional core of the 30S ribosomal subunit. Associates with free 30S ribosomal subunits (but not with 30S subunits that are part of 70S ribosomes or polysomes). Required for efficient processing of 16S rRNA. May interact with the 5'-terminal helix region of 16S rRNA. The polypeptide is Ribosome-binding factor A (Chromobacterium violaceum (strain ATCC 12472 / DSM 30191 / JCM 1249 / CCUG 213 / NBRC 12614 / NCIMB 9131 / NCTC 9757 / MK)).